The following is a 247-amino-acid chain: DNA repair protein RecO (247 aa).

The protein belongs to the RecO family.

Involved in DNA repair and RecF pathway recombination. The chain is DNA repair protein RecO from Methylocella silvestris (strain DSM 15510 / CIP 108128 / LMG 27833 / NCIMB 13906 / BL2).